The primary structure comprises 46 residues: Mu-segestritoxin-Sf1f (46 aa).

Cystine bridges form between Cys-3–Cys-19, Cys-10–Cys-22, Cys-18–Cys-42, and Cys-24–Cys-40. Positions 31 to 33 (RPW) are keys region for toxin activity.

This sequence belongs to the neurotoxin 16 (SFI) family. As to expression, expressed by the venom gland.

The protein resides in the secreted. Functionally, insecticidal toxin. It inhibits insect voltage-gated sodium channels (Nav) by partially blocking the channel pore in DUM neurons from the American cockroach, not by acting as a gating modifier. The inhibition is only partially reversible after prolonged washout. In vivo, the toxin causes flaccid paralysis followed by death when injected into Heliothis virescens larvae. It also causes uncoordinated movements followed by full paralysis to sheep blowflies (Lucilia cuprina). When the toxin is fused to snowdrop lectin, it is orally active against larvae of the tomato moth (Laconobia oleracea), the rice brown planthopper (Nilaparvata lugens), and the peach-potato aphid (Myzus persicae). The sequence is that of Mu-segestritoxin-Sf1f from Segestria florentina (Tube-web spider).